We begin with the raw amino-acid sequence, 427 residues long: Peptidase B (427 aa).

The Mn(2+) site is built by K195 and D200. Residue K207 is part of the active site. The Mn(2+) site is built by D218, D277, and E279. R281 is an active-site residue.

It belongs to the peptidase M17 family. As to quaternary structure, homohexamer. Mn(2+) is required as a cofactor.

The protein localises to the cytoplasm. The enzyme catalyses Release of an N-terminal amino acid, Xaa, from a peptide or arylamide. Xaa is preferably Glu or Asp but may be other amino acids, including Leu, Met, His, Cys and Gln.. Its function is as follows. Probably plays an important role in intracellular peptide degradation. This chain is Peptidase B, found in Shigella dysenteriae serotype 1 (strain Sd197).